The sequence spans 220 residues: Flavin-dependent thymidylate synthase (220 aa).

The 208-residue stretch at 1-208 (MKIDILDKGF…PWTFEAFLKY (208 aa)) folds into the ThyX domain. FAD-binding positions include threonine 55, 78 to 80 (RHR), and glutamate 86. Residues 75–78 (QWFR), 86–90 (ELSGR), and arginine 147 contribute to the dUMP site. Residues 78–88 (RHRIASYNELS) carry the ThyX motif motif. Residues 163–165 (NAR) and asparagine 169 each bind FAD. Residue arginine 174 participates in dUMP binding. Arginine 174 acts as the Involved in ionization of N3 of dUMP, leading to its activation in catalysis.

It belongs to the thymidylate synthase ThyX family. As to quaternary structure, homotetramer. FAD serves as cofactor.

The catalysed reaction is dUMP + (6R)-5,10-methylene-5,6,7,8-tetrahydrofolate + NADPH + H(+) = dTMP + (6S)-5,6,7,8-tetrahydrofolate + NADP(+). It functions in the pathway pyrimidine metabolism; dTTP biosynthesis. Functionally, catalyzes the reductive methylation of 2'-deoxyuridine-5'-monophosphate (dUMP) to 2'-deoxythymidine-5'-monophosphate (dTMP) while utilizing 5,10-methylenetetrahydrofolate (mTHF) as the methyl donor, and NADPH and FADH(2) as the reductant. The chain is Flavin-dependent thymidylate synthase from Thermotoga petrophila (strain ATCC BAA-488 / DSM 13995 / JCM 10881 / RKU-1).